We begin with the raw amino-acid sequence, 279 residues long: Acetyl-coenzyme A carboxylase carboxyl transferase subunit beta (279 aa).

In terms of domain architecture, CoA carboxyltransferase N-terminal spans 27–279; it reads LFLACPYCGT…IVKLHHRTEI (253 aa). Zn(2+) is bound by residues Cys31, Cys34, Cys49, and Cys52. The segment at 31 to 52 adopts a C4-type zinc-finger fold; the sequence is CPYCGTQMYNKQLGDYRVCAKC.

It belongs to the AccD/PCCB family. In terms of assembly, acetyl-CoA carboxylase is a heterohexamer composed of biotin carboxyl carrier protein (AccB), biotin carboxylase (AccC) and two subunits each of ACCase subunit alpha (AccA) and ACCase subunit beta (AccD). Zn(2+) serves as cofactor.

Its subcellular location is the cytoplasm. It carries out the reaction N(6)-carboxybiotinyl-L-lysyl-[protein] + acetyl-CoA = N(6)-biotinyl-L-lysyl-[protein] + malonyl-CoA. The protein operates within lipid metabolism; malonyl-CoA biosynthesis; malonyl-CoA from acetyl-CoA: step 1/1. Component of the acetyl coenzyme A carboxylase (ACC) complex. Biotin carboxylase (BC) catalyzes the carboxylation of biotin on its carrier protein (BCCP) and then the CO(2) group is transferred by the transcarboxylase to acetyl-CoA to form malonyl-CoA. The protein is Acetyl-coenzyme A carboxylase carboxyl transferase subunit beta of Leuconostoc citreum (strain KM20).